A 576-amino-acid polypeptide reads, in one-letter code: Urease subunit alpha (576 aa).

Residues 132 to 576 (GGVDTHIHFI…LPMAQRYFLF (445 aa)) form the Urease domain. The Ni(2+) site is built by His137, His139, and Lys220. Lys220 carries the N6-carboxylysine modification. His222 is a substrate binding site. Residues His249 and His275 each contribute to the Ni(2+) site. His323 acts as the Proton donor in catalysis. Ni(2+) is bound at residue Asp363.

The protein belongs to the metallo-dependent hydrolases superfamily. Urease alpha subunit family. As to quaternary structure, heterotrimer of UreA (gamma), UreB (beta) and UreC (alpha) subunits. Three heterotrimers associate to form the active enzyme. Ni cation serves as cofactor. Post-translationally, carboxylation allows a single lysine to coordinate two nickel ions.

It is found in the cytoplasm. It carries out the reaction urea + 2 H2O + H(+) = hydrogencarbonate + 2 NH4(+). It participates in nitrogen metabolism; urea degradation; CO(2) and NH(3) from urea (urease route): step 1/1. This chain is Urease subunit alpha, found in Arthrobacter sp. (strain FB24).